The primary structure comprises 384 residues: Dihydrolipoyllysine-residue acetyltransferase component of pyruvate dehydrogenase complex (384 aa).

The Lipoyl-binding domain maps to 2–77 (ANEFKFTDVG…SIGQVMAVIG (76 aa)). K43 carries the post-translational modification N6-lipoyllysine. H356 is a catalytic residue.

Belongs to the 2-oxoacid dehydrogenase family. In terms of assembly, forms a 24-polypeptide structural core with octahedral symmetry. Requires (R)-lipoate as cofactor.

It catalyses the reaction N(6)-[(R)-dihydrolipoyl]-L-lysyl-[protein] + acetyl-CoA = N(6)-[(R)-S(8)-acetyldihydrolipoyl]-L-lysyl-[protein] + CoA. In terms of biological role, the pyruvate dehydrogenase complex catalyzes the overall conversion of pyruvate to acetyl-CoA and CO(2). It contains multiple copies of three enzymatic components: pyruvate dehydrogenase (E1), dihydrolipoamide acetyltransferase (E2) and lipoamide dehydrogenase (E3). The sequence is that of Dihydrolipoyllysine-residue acetyltransferase component of pyruvate dehydrogenase complex (pdhC) from Mycoplasma genitalium (strain ATCC 33530 / DSM 19775 / NCTC 10195 / G37) (Mycoplasmoides genitalium).